Here is a 26-residue protein sequence, read N- to C-terminus: Phospholipase A2 homolog A1 (26 aa).

Contains 7 disulfide bonds. In terms of tissue distribution, expressed by the venom gland.

It localises to the secreted. This is Phospholipase A2 homolog A1 from Micrurus pyrrhocryptus (Coral snake).